The sequence spans 1988 residues: Protein Ycf2 (1988 aa).

An ATP-binding site is contributed by 1337 to 1344 (GSIGTGRS). The interval 1377–1396 (SDDDSDDIDDSGDIDDSDDI) is disordered.

This sequence belongs to the Ycf2 family.

The protein resides in the plastid. Its subcellular location is the chloroplast stroma. Probable ATPase of unknown function. Its presence in a non-photosynthetic plant (Epifagus virginiana) and experiments in tobacco indicate that it has an essential function which is probably not related to photosynthesis. This chain is Protein Ycf2, found in Cucumis sativus (Cucumber).